The primary structure comprises 256 residues: 5-keto-4-deoxy-D-glucarate aldolase (256 aa).

The active-site Proton acceptor is the H50. Q151 is a substrate binding site. E153 contacts Mg(2+). S178 and D179 together coordinate substrate. Mg(2+) is bound at residue D179.

The protein belongs to the HpcH/HpaI aldolase family. KDGluc aldolase subfamily. In terms of assembly, homohexamer; trimer of dimers. Requires Mg(2+) as cofactor.

The enzyme catalyses 5-dehydro-4-deoxy-D-glucarate = 2-hydroxy-3-oxopropanoate + pyruvate. It carries out the reaction 2-dehydro-3-deoxy-D-glucarate = 2-hydroxy-3-oxopropanoate + pyruvate. Its pathway is carbohydrate acid metabolism; galactarate degradation; D-glycerate from galactarate: step 2/3. Catalyzes the reversible retro-aldol cleavage of both 5-keto-4-deoxy-D-glucarate and 2-keto-3-deoxy-D-glucarate to pyruvate and tartronic semialdehyde. This Salmonella paratyphi A (strain ATCC 9150 / SARB42) protein is 5-keto-4-deoxy-D-glucarate aldolase.